The primary structure comprises 319 residues: Biotin synthase (319 aa).

The 230-residue stretch at Ile44 to Arg273 folds into the Radical SAM core domain. [4Fe-4S] cluster contacts are provided by Cys62, Cys66, and Cys69. The [2Fe-2S] cluster site is built by Ser106, Cys138, Cys198, and Arg268.

It belongs to the radical SAM superfamily. Biotin synthase family. Homodimer. Requires [4Fe-4S] cluster as cofactor. [2Fe-2S] cluster is required as a cofactor.

The catalysed reaction is (4R,5S)-dethiobiotin + (sulfur carrier)-SH + 2 reduced [2Fe-2S]-[ferredoxin] + 2 S-adenosyl-L-methionine = (sulfur carrier)-H + biotin + 2 5'-deoxyadenosine + 2 L-methionine + 2 oxidized [2Fe-2S]-[ferredoxin]. The protein operates within cofactor biosynthesis; biotin biosynthesis; biotin from 7,8-diaminononanoate: step 2/2. Its function is as follows. Catalyzes the conversion of dethiobiotin (DTB) to biotin by the insertion of a sulfur atom into dethiobiotin via a radical-based mechanism. The chain is Biotin synthase from Clostridium perfringens (strain 13 / Type A).